Here is a 474-residue protein sequence, read N- to C-terminus: 4-aminobutyrate aminotransferase (474 aa).

Polar residues predominate over residues 1 to 13; that stretch reads MSSTATVTESTHF. A disordered region spans residues 1–31; the sequence is MSSTATVTESTHFFPNEPQGPSIKTETIPGP. 142-143 lines the pyridoxal 5'-phosphate pocket; that stretch reads GS. R199 provides a ligand contact to substrate. K333 carries the post-translational modification N6-(pyridoxal phosphate)lysine. T357 is a pyridoxal 5'-phosphate binding site.

The protein belongs to the class-III pyridoxal-phosphate-dependent aminotransferase family. Homodimer. Pyridoxal 5'-phosphate serves as cofactor.

It is found in the cytoplasm. The enzyme catalyses 4-aminobutanoate + 2-oxoglutarate = succinate semialdehyde + L-glutamate. Its function is as follows. Required for the degradation of gamma-aminobutyric acid (GABA), which is important for utilization of GABA as nitrogen source. Deaminates GABA to succinate-semialdehyde, which in turn is converted to succinate by the succinate semialdehyde dehydrogenase. Cannot transaminate beta-alanine (BAL). The sequence is that of 4-aminobutyrate aminotransferase (uga1) from Schizosaccharomyces pombe (strain 972 / ATCC 24843) (Fission yeast).